The sequence spans 123 residues: Potassium voltage-gated channel subfamily E member 2 (123 aa).

Residues Asn-6 and Asn-29 are each glycosylated (N-linked (GlcNAc...) asparagine). Residues 49-69 form a helical membrane-spanning segment; that stretch reads VILYLMVMIGMFAFIVVAILV. The Cytoplasmic portion of the chain corresponds to 70–123; it reads STVKSKRREHSQDPYHQYIVEDWQQKYRSQILHLEDSKATIHENLGATGFTVSP.

The protein belongs to the potassium channel KCNE family. As to quaternary structure, interacts with KCNB1. Associates with KCNH2/ERG1. May associate with KCNQ2 and KCNQ3. Associates with HCN1 and probably HCN2. Heteromultimer with KCNC2. Interacts with KCNC2. Interacts with KCNQ1; forms a heterooligomer complex that targets to the membrane raft and leading to currents with an apparently instantaneous activation, a rapid deactivation process and a linear current-voltage relationship and decreases the amplitude of the outward current.

The protein localises to the cell membrane. The protein resides in the apical cell membrane. Its function is as follows. Ancillary protein that functions as a regulatory subunit of the voltage-gated potassium (Kv) channel complex composed of pore-forming and potassium-conducting alpha subunits and of regulatory beta subunits. KCNE2 beta subunit modulates the gating kinetics and enhances stability of the channel complex. Alters the gating of the delayed rectifier Kv channel containing KCNB1 alpha subunit. Associates with KCNH2/HERG alpha subunit Kv channel to form the rapidly activating component of the delayed rectifying potassium current (IKr) in heart. May associate with KCNQ2 and/or KCNQ3 alpha subunits to modulate the native M-type current. May associate with HCN1 and HCN2 channel subunits to increase potassium current. Forms a heterooligomer complex with KCNQ1/KVLQT1 alpha subunits which leads to currents with an apparently instantaneous activation, a rapid deactivation process and a linear current-voltage relationship and decreases the amplitude of the outward current. KCNQ1-KCNE2 channel associates with Na(+)-coupled myo-inositol symporter in the apical membrane of choroid plexus epithelium and regulates the myo-inositol gradient between blood and cerebrospinal fluid with an impact on neuron excitability. The chain is Potassium voltage-gated channel subfamily E member 2 (Kcne2) from Cavia porcellus (Guinea pig).